Consider the following 469-residue polypeptide: Zinc transporter SLC39A7 (469 aa).

The chain crosses the membrane as a helical span at residues 10 to 30 (WVAVGLLTWATLGLLVAGLGG). Basic and acidic residues-rich tracts occupy residues 42–56 (FHGH…DFHH) and 66–114 (HTHE…EHSH). The tract at residues 42–121 (FHGHSHRHSH…HSHGGYGESG (80 aa)) is disordered. At His-66 the chain carries Pros-methylhistidine. A run of 3 helical transmembrane segments spans residues 138-158 (ALGA…LIPV), 169-189 (LQIL…LHLI), and 214-234 (GPIL…LVVE). Positions 242–263 (GGHGHSHGHGHAHSHTRGSHGH) are enriched in basic residues. The interval 242–310 (GGHGHSHGHG…VRPQNAEEEK (69 aa)) is disordered. Basic and acidic residues predominate over residues 264 to 285 (GRQERSTKEKQSSEEEEKETRG). Phosphoserine; by CK2 occurs at positions 275 and 276. 2 helical membrane-spanning segments follow: residues 381-401 (MRLQ…ALLT) and 417-436 (GWVL…VSVL).

Belongs to the ZIP transporter (TC 2.A.5) family. KE4/Catsup subfamily. As to quaternary structure, homodimer. Post-translationally, rapidly phosphorylated by CK2 following Zn(2+) treatment. This phosphorylation is required for efficient cytosolic Zn(2+) release. In terms of processing, methylation at some His residue by METTL9 leads to reduced zinc-binding. Widely expressed.

The protein resides in the endoplasmic reticulum membrane. It is found in the golgi apparatus. The protein localises to the cis-Golgi network membrane. It carries out the reaction Zn(2+)(in) = Zn(2+)(out). Phosphorylation activates zinc transport activity. In terms of biological role, transports Zn(2+) from the endoplasmic reticulum (ER)/Golgi apparatus to the cytosol, playing an essential role in the regulation of cytosolic zinc levels. Acts as a gatekeeper of zinc release from intracellular stores, requiring post-translational activation by phosphorylation, resulting in activation of multiple downstream pathways leading to cell growth and proliferation. Has an essential role in B cell development and is required for proper B cell receptor signaling. Plays an important role in maintaining intestinal epithelial homeostasis and skin dermis development by regulating ER function. Controls cell signaling pathways involved in glucose metabolism in skeletal muscle. Has a protective role against ER stress in different biological contexts. Mediates Zn(2+)-induced ferroptosis. The chain is Zinc transporter SLC39A7 (SLC39A7) from Homo sapiens (Human).